The primary structure comprises 175 residues: Nucleoside triphosphate/diphosphate phosphatase (175 aa).

The active-site Proton donor is the Arg23. Residues Asn87, Asp103, Asp105, Asp107, Asp120, and Glu123 each coordinate Mg(2+).

This sequence belongs to the Ntdp family. The cofactor is Mg(2+).

It carries out the reaction a ribonucleoside 5'-triphosphate + H2O = a ribonucleoside 5'-diphosphate + phosphate + H(+). The enzyme catalyses a ribonucleoside 5'-diphosphate + H2O = a ribonucleoside 5'-phosphate + phosphate + H(+). In terms of biological role, has nucleoside phosphatase activity towards nucleoside triphosphates and nucleoside diphosphates. In Listeria innocua serovar 6a (strain ATCC BAA-680 / CLIP 11262), this protein is Nucleoside triphosphate/diphosphate phosphatase.